Consider the following 336-residue polypeptide: tRNA (guanine(37)-N(1))-methyltransferase Trm5b (336 aa).

S-adenosyl-L-methionine is bound by residues R186, 223-224, 251-252, and N265; these read DI and DV.

This sequence belongs to the class I-like SAM-binding methyltransferase superfamily. TRM5/TYW2 family. Monomer.

Its subcellular location is the cytoplasm. The enzyme catalyses guanosine(37) in tRNA + S-adenosyl-L-methionine = N(1)-methylguanosine(37) in tRNA + S-adenosyl-L-homocysteine + H(+). In terms of biological role, specifically methylates the N1 position of guanosine-37 in various tRNAs. The sequence is that of tRNA (guanine(37)-N(1))-methyltransferase Trm5b (trm5b) from Methanocaldococcus jannaschii (strain ATCC 43067 / DSM 2661 / JAL-1 / JCM 10045 / NBRC 100440) (Methanococcus jannaschii).